The chain runs to 102 residues: ATP-dependent Clp protease adapter protein ClpS (102 aa).

The protein belongs to the ClpS family. Binds to the N-terminal domain of the chaperone ClpA.

Its function is as follows. Involved in the modulation of the specificity of the ClpAP-mediated ATP-dependent protein degradation. This Shewanella oneidensis (strain ATCC 700550 / JCM 31522 / CIP 106686 / LMG 19005 / NCIMB 14063 / MR-1) protein is ATP-dependent Clp protease adapter protein ClpS.